We begin with the raw amino-acid sequence, 213 residues long: Orotate phosphoribosyltransferase (213 aa).

5-phospho-alpha-D-ribose 1-diphosphate is bound at residue Lys26. 34 to 35 is a binding site for orotate; sequence FF. 5-phospho-alpha-D-ribose 1-diphosphate is bound by residues 72-73, Arg99, Lys100, Lys103, His105, and 124-132; these read YK and DDVITAGTA. Orotate-binding residues include Thr128 and Arg156.

Belongs to the purine/pyrimidine phosphoribosyltransferase family. PyrE subfamily. Homodimer. It depends on Mg(2+) as a cofactor.

It carries out the reaction orotidine 5'-phosphate + diphosphate = orotate + 5-phospho-alpha-D-ribose 1-diphosphate. Its pathway is pyrimidine metabolism; UMP biosynthesis via de novo pathway; UMP from orotate: step 1/2. Functionally, catalyzes the transfer of a ribosyl phosphate group from 5-phosphoribose 1-diphosphate to orotate, leading to the formation of orotidine monophosphate (OMP). This is Orotate phosphoribosyltransferase from Klebsiella pneumoniae (strain 342).